Consider the following 474-residue polypeptide: tRNA-2-methylthio-N(6)-dimethylallyladenosine synthase (474 aa).

The region spanning 3–120 (KKLHIKTWGC…LPEMINAVRG (118 aa)) is the MTTase N-terminal domain. [4Fe-4S] cluster contacts are provided by Cys12, Cys49, Cys83, Cys157, Cys161, and Cys164. Residues 143–375 (RADGPTAFVS…QERINQQAMA (233 aa)) enclose the Radical SAM core domain. The TRAM domain occupies 378 to 441 (RRMLGTVQRI…TNSLRGKIVR (64 aa)).

Belongs to the methylthiotransferase family. MiaB subfamily. Monomer. The cofactor is [4Fe-4S] cluster.

Its subcellular location is the cytoplasm. It catalyses the reaction N(6)-dimethylallyladenosine(37) in tRNA + (sulfur carrier)-SH + AH2 + 2 S-adenosyl-L-methionine = 2-methylsulfanyl-N(6)-dimethylallyladenosine(37) in tRNA + (sulfur carrier)-H + 5'-deoxyadenosine + L-methionine + A + S-adenosyl-L-homocysteine + 2 H(+). Its function is as follows. Catalyzes the methylthiolation of N6-(dimethylallyl)adenosine (i(6)A), leading to the formation of 2-methylthio-N6-(dimethylallyl)adenosine (ms(2)i(6)A) at position 37 in tRNAs that read codons beginning with uridine. In Klebsiella pneumoniae (strain 342), this protein is tRNA-2-methylthio-N(6)-dimethylallyladenosine synthase.